The sequence spans 148 residues: Glutamate mutase sigma subunit 2 (148 aa).

The B12-binding domain occupies 1 to 134 (MRTVILGVIG…EALKADLGHR (134 aa)). Adenosylcob(III)alamin contacts are provided by residues 11-15 (SDAHV), His-14, 59-61 (SSL), and 90-94 (NLAVG). Residues 129-141 (ADLGHRSREEASS) show a composition bias toward basic and acidic residues. Residues 129–148 (ADLGHRSREEASSEKVQLGS) form a disordered region.

It belongs to the methylaspartate mutase GlmS subunit family. As to quaternary structure, heterotetramer composed of 2 epsilon subunits (GlmE) and 2 sigma subunits (GlmS). GlmE exists as a homodimer and GlmS as a monomer. It depends on adenosylcob(III)alamin as a cofactor.

It catalyses the reaction (2S,3S)-3-methyl-L-aspartate = L-glutamate. Its pathway is amino-acid degradation; L-glutamate degradation via mesaconate pathway; acetate and pyruvate from L-glutamate: step 1/4. Catalyzes the carbon skeleton rearrangement of L-glutamate to L-threo-3-methylaspartate ((2S,3S)-3-methylaspartate). In Haloarcula marismortui (strain ATCC 43049 / DSM 3752 / JCM 8966 / VKM B-1809) (Halobacterium marismortui), this protein is Glutamate mutase sigma subunit 2.